We begin with the raw amino-acid sequence, 376 residues long: Cysteine synthase 1 (376 aa).

Residues 1 to 16 constitute a mitochondrion transit peptide; that stretch reads MFRHGVRTFATTSLRR. K79 carries the post-translational modification N6-(pyridoxal phosphate)lysine. Pyridoxal 5'-phosphate contacts are provided by residues N109, 215 to 219, and S314; that span reads GTGGT.

The protein belongs to the cysteine synthase/cystathionine beta-synthase family. It depends on pyridoxal 5'-phosphate as a cofactor.

Its subcellular location is the mitochondrion. It carries out the reaction O-succinyl-L-serine + hydrogen sulfide = L-cysteine + succinate. The catalysed reaction is O-acetyl-L-serine + hydrogen sulfide = L-cysteine + acetate. It functions in the pathway amino-acid biosynthesis; L-cysteine biosynthesis; L-cysteine from L-serine: step 2/2. In terms of biological role, catalyzes the conversion of O-succinyl-L-serine into cysteine, the last step in the cysteine biosynthesis pathway. Can also use O-acetyl-L-serine. The chain is Cysteine synthase 1 (cys-17) from Neurospora crassa (strain ATCC 24698 / 74-OR23-1A / CBS 708.71 / DSM 1257 / FGSC 987).